The sequence spans 174 residues: Guided entry of tail-anchored proteins factor 1 (174 aa).

At M1–R8 the chain is on the lumenal side. Residues W9–P29 traverse the membrane as a helical segment. The Cytoplasmic portion of the chain corresponds to T30–K99. The stretch at L39–T94 forms a coiled coil. The interaction with GET3/TRC40 stretch occupies residues L39 to L97. The chain crosses the membrane as a helical span at residues I100–I120. At W121–R148 the chain is on the lumenal side. Residues V149–I169 form a helical membrane-spanning segment. Residues L170–S174 are Cytoplasmic-facing.

It belongs to the WRB/GET1 family. As to quaternary structure, component of the Golgi to ER traffic (GET) complex, which is composed of GET1, CAMLG/GET2 and GET3. Within the complex, GET1 and CAMLG form a heterotetramer which is stabilized by phosphatidylinositol binding and which binds to the GET3 homodimer. Interacts with CAMLG/GET2 (via C-terminus). GET3 shows a higher affinity for CAMLG than for GET1.

It localises to the endoplasmic reticulum membrane. Its function is as follows. Required for the post-translational delivery of tail-anchored (TA) proteins to the endoplasmic reticulum. Together with CAMLG/GET2, acts as a membrane receptor for soluble GET3/TRC40, which recognizes and selectively binds the transmembrane domain of TA proteins in the cytosol. Required to ensure correct topology and ER insertion of CAMLG. The chain is Guided entry of tail-anchored proteins factor 1 from Rattus norvegicus (Rat).